The following is a 224-amino-acid chain: Magnesium-protoporphyrin O-methyltransferase (224 aa).

The protein belongs to the class I-like SAM-binding methyltransferase superfamily. Magnesium protoporphyrin O-methyltransferase family.

It catalyses the reaction Mg-protoporphyrin IX + S-adenosyl-L-methionine = Mg-protoporphyrin IX 13-monomethyl ester + S-adenosyl-L-homocysteine. It functions in the pathway porphyrin-containing compound metabolism; bacteriochlorophyll biosynthesis (light-independent). Functionally, converts Mg-protoporphyrin IX to Mg-protoporphyrin IX methylester using S-adenosyl-L-methionine as a cofactor. In Rhodobacter capsulatus (Rhodopseudomonas capsulata), this protein is Magnesium-protoporphyrin O-methyltransferase (bchM).